Reading from the N-terminus, the 137-residue chain is Large ribosomal subunit protein eL32 (137 aa).

The disordered stretch occupies residues 95–137; sequence PSAAEIATPVSSRKRIASSPARQADRCSRSRRSKFRPRRLRAS. Residues 123 to 137 are compositionally biased toward basic residues; that stretch reads RSRRSKFRPRRLRAS.

It belongs to the eukaryotic ribosomal protein eL32 family.

The chain is Large ribosomal subunit protein eL32 (rpl32) from Trichoderma harzianum (Hypocrea lixii).